A 747-amino-acid chain; its full sequence is Polyribonucleotide nucleotidyltransferase (747 aa).

2 residues coordinate Mg(2+): aspartate 493 and aspartate 499. The KH domain occupies 560–619 (PRIITLQINPEKIGALIGPGGKTVRGITEATGAQIDIEEDGRVYISTPDAAAAQQAVAMV). In terms of domain architecture, S1 motif spans 629–698 (GDIFLGKVVR…GTGKVSLSRR (70 aa)). The segment at 705-747 (TAEDRRAAGAGRGLRDGGGRSGGSDRGGDRGPRGDDRQRPRRR) is disordered. Composition is skewed to basic and acidic residues over residues 706–722 (AEDRRAAGAGRGLRDGG) and 730–747 (RGGDRGPRGDDRQRPRRR).

This sequence belongs to the polyribonucleotide nucleotidyltransferase family. Mg(2+) serves as cofactor.

It is found in the cytoplasm. The enzyme catalyses RNA(n+1) + phosphate = RNA(n) + a ribonucleoside 5'-diphosphate. Involved in mRNA degradation. Catalyzes the phosphorolysis of single-stranded polyribonucleotides processively in the 3'- to 5'-direction. The sequence is that of Polyribonucleotide nucleotidyltransferase from Roseiflexus sp. (strain RS-1).